Consider the following 414-residue polypeptide: WD repeat-containing protein jip5 (414 aa).

5 WD repeats span residues 9-48 (PLSA…SSDD), 73-112 (RHKG…VENK), 118-159 (AKDG…SNVS), 222-263 (VSSV…DQDE), and 319-356 (DETE…NDMD). The interval 39–65 (RLPSEESSDDDDGTASNSSARNGKGHI) is disordered. The interval 357–414 (VDMAGGKRMFGGDSDDSDDDNDSEDSEQEQRQPVEPQRKRKKNKGKGKRDIIAFADID) is disordered. Over residues 369–383 (DSDDSDDDNDSEDSE) the composition is skewed to acidic residues. Positions 394–403 (RKRKKNKGKG) are enriched in basic residues.

Belongs to the WD repeat WDR55 family.

The protein resides in the nucleus. It is found in the nucleolus. The sequence is that of WD repeat-containing protein jip5 (jip5) from Aspergillus clavatus (strain ATCC 1007 / CBS 513.65 / DSM 816 / NCTC 3887 / NRRL 1 / QM 1276 / 107).